The following is a 363-amino-acid chain: Type 3 secretion system translocon protein SctB (363 aa).

The segment covering 1-16 has biased composition (polar residues); the sequence is MEIQNTKPTQTLYTDI. The disordered stretch occupies residues 1–30; the sequence is MEIQNTKPTQTLYTDISTKQTQSSSETQKS. Over residues 17–30 the composition is skewed to low complexity; it reads STKQTQSSSETQKS. Residues 33-73 are ipgC chaperone binding domain; it reads YQQIAAHIPLNVGKNPVLTTTLNDDQLLKLSEQVQHDSEII. Residues 99-120 traverse the membrane as a helical segment; that stretch reads ISSLSSNAVSLIISVAVLLSAL.

Belongs to the SctB/SipC family. The core secretion machinery of the T3SS is composed of approximately 20 different proteins, including cytoplasmic components, a base, an export apparatus and a needle. This subunit is involved in the formation of a pore, called the translocon, in host membrane. Interacts with IpaB/SctE. Interacts with the molecular chaperone IpgC, which prevents premature association with IpaB/SctE within the cytoplasm of Shigella cells. Does not interact with CDC42 or RAC1 GTPases in vitro.

It localises to the secreted. The protein localises to the host membrane. Interaction with the membrane is affected by the pH. Functionally, component of the type III secretion system (T3SS), also called injectisome, which is used to inject bacterial effector proteins into eukaryotic host cells. IpaB/SctE and IpaC/SctB are inserted into the host membrane where they form a pore and allow the translocation of effector proteins into the cytosol of target cells. Induction and secretion of IpaC/SctB comprise the final step in triggering the induction of full type III secretion. Its function is as follows. Required for efficient dissemination. Necessary for lysis of the two cellular membranes that surround bacteria in protrusions during cell-to-cell spread. Contribute to actin nucleation in vitro, which may be a necessary step in Shigella invasion. This chain is Type 3 secretion system translocon protein SctB, found in Shigella flexneri.